We begin with the raw amino-acid sequence, 480 residues long: Protein nucleotidyltransferase YdiU (480 aa).

The ATP site is built by G86, G88, R89, K109, D121, G122, R172, and R179. D248 (proton acceptor) is an active-site residue. N249 and D258 together coordinate Mg(2+). D258 provides a ligand contact to ATP.

This sequence belongs to the SELO family. Mg(2+) is required as a cofactor. Requires Mn(2+) as cofactor.

The enzyme catalyses L-seryl-[protein] + ATP = 3-O-(5'-adenylyl)-L-seryl-[protein] + diphosphate. The catalysed reaction is L-threonyl-[protein] + ATP = 3-O-(5'-adenylyl)-L-threonyl-[protein] + diphosphate. It catalyses the reaction L-tyrosyl-[protein] + ATP = O-(5'-adenylyl)-L-tyrosyl-[protein] + diphosphate. It carries out the reaction L-histidyl-[protein] + UTP = N(tele)-(5'-uridylyl)-L-histidyl-[protein] + diphosphate. The enzyme catalyses L-seryl-[protein] + UTP = O-(5'-uridylyl)-L-seryl-[protein] + diphosphate. The catalysed reaction is L-tyrosyl-[protein] + UTP = O-(5'-uridylyl)-L-tyrosyl-[protein] + diphosphate. In terms of biological role, nucleotidyltransferase involved in the post-translational modification of proteins. It can catalyze the addition of adenosine monophosphate (AMP) or uridine monophosphate (UMP) to a protein, resulting in modifications known as AMPylation and UMPylation. The polypeptide is Protein nucleotidyltransferase YdiU (Salmonella paratyphi C (strain RKS4594)).